The following is a 476-amino-acid chain: Glutamate--tRNA ligase (476 aa).

The 'HIGH' region signature appears at 9 to 19 (PSPTGTLHIGT). Residues 248 to 252 (KLSKR) carry the 'KMSKS' region motif. Residue K251 participates in ATP binding.

Belongs to the class-I aminoacyl-tRNA synthetase family. Glutamate--tRNA ligase type 1 subfamily. As to quaternary structure, monomer.

It is found in the cytoplasm. It catalyses the reaction tRNA(Glu) + L-glutamate + ATP = L-glutamyl-tRNA(Glu) + AMP + diphosphate. Functionally, catalyzes the attachment of glutamate to tRNA(Glu) in a two-step reaction: glutamate is first activated by ATP to form Glu-AMP and then transferred to the acceptor end of tRNA(Glu). This chain is Glutamate--tRNA ligase, found in Prochlorococcus marinus (strain MIT 9313).